Here is a 273-residue protein sequence, read N- to C-terminus: MAAGVIRSVCDFRLPLPSHESFLPIDLEAPEISEEEEEEEEEEEEEEEEEEVDQDQQGEGSQGCGPDSQSSGVVPQDPSSPETPMQLLRFSELISGDIQRYFGRKDTGQDPDAQDIYADSQPASCSARDLYYADLVCLAQDGPPEDEEAAEFRMHLPGGPEGQVHRLGHRGDRVPPLGPLAELFDYGLRQFSRPRISACRRLRLERKYSHITPMTQRKLPPSFWKEPVPNPLGLLHVGTPDFSDLLASWSAEGGSELQSGGTQGLEGTQLAEV.

2 disordered regions span residues 18–84 and 253–273; these read SHES…PETP and GGSE…LAEV. The segment covering 28-56 has biased composition (acidic residues); sequence EAPEISEEEEEEEEEEEEEEEEEEVDQDQ. A compositionally biased stretch (polar residues) spans 67–83; sequence DSQSSGVVPQDPSSPET.

Specifically expressed in the stomach, pancreas and intestine. In gastrointestinal tissue, expression is primarily restricted to gastric G cells and duodenal enteroendocrine cells (EECs).

Its function is as follows. Plays a critical role in intestinal function by promoting the development of enteroendocrine cells (EECs) of the gastrointestinal tract and pancreas. It is thereby required for normal enteroendocrine peptide hormone secretion. The polypeptide is Protein PERCC1 (Mus musculus (Mouse)).